The following is a 290-amino-acid chain: Glycine--tRNA ligase alpha subunit (290 aa).

This sequence belongs to the class-II aminoacyl-tRNA synthetase family. Tetramer of two alpha and two beta subunits.

The protein localises to the cytoplasm. The catalysed reaction is tRNA(Gly) + glycine + ATP = glycyl-tRNA(Gly) + AMP + diphosphate. The protein is Glycine--tRNA ligase alpha subunit of Prochlorococcus marinus (strain NATL2A).